Reading from the N-terminus, the 180-residue chain is Large ribosomal subunit protein uL5 (180 aa).

The protein belongs to the universal ribosomal protein uL5 family. As to quaternary structure, part of the 50S ribosomal subunit; part of the 5S rRNA/L5/L18/L25 subcomplex. Contacts the 5S rRNA and the P site tRNA. Forms a bridge to the 30S subunit in the 70S ribosome.

In terms of biological role, this is one of the proteins that bind and probably mediate the attachment of the 5S RNA into the large ribosomal subunit, where it forms part of the central protuberance. In the 70S ribosome it contacts protein S13 of the 30S subunit (bridge B1b), connecting the 2 subunits; this bridge is implicated in subunit movement. Contacts the P site tRNA; the 5S rRNA and some of its associated proteins might help stabilize positioning of ribosome-bound tRNAs. The chain is Large ribosomal subunit protein uL5 from Mycoplasma capricolum subsp. capricolum (strain California kid / ATCC 27343 / NCTC 10154).